Here is a 210-residue protein sequence, read N- to C-terminus: Putative 3-methyladenine DNA glycosylase (210 aa).

It belongs to the DNA glycosylase MPG family.

This chain is Putative 3-methyladenine DNA glycosylase, found in Corynebacterium glutamicum (strain R).